Reading from the N-terminus, the 471-residue chain is Heparan-sulfate 6-O-sulfotransferase 3 (471 aa).

Over 1–4 the chain is Cytoplasmic; that stretch reads MDER. A helical; Signal-anchor for type II membrane protein membrane pass occupies residues 5–27; it reads FNKWLLTPVLTLLFVVIMYQYVS. Residues 28 to 471 are Lumenal-facing; it reads PSCTSSCTNF…EDYNSQVVRW (444 aa). The tract at residues 39 to 122 is disordered; that stretch reads EQPRAGEAGP…EAPENGSLPR (84 aa). The span at 41–62 shows a compositional bias: low complexity; sequence PRAGEAGPPAVPGPARRAQAPP. Residues 70–81 are compositionally biased toward pro residues; sequence QLPPPPRGPPEG. Acidic residues predominate over residues 88-114; that stretch reads PEEEDEEPGDPREGEEEEEEDEPDPEA. Residues asparagine 117 and asparagine 128 are each glycosylated (N-linked (GlcNAc...) asparagine). 152 to 160 serves as a coordination point for 3'-phosphoadenylyl sulfate; the sequence is HIQKTGGTT. Substrate contacts are provided by residues 182-183, arginine 199, tryptophan 204, and histidine 209; that span reads KK. Histidine 209 (proton acceptor) is an active-site residue. Asparagine 231 carries an N-linked (GlcNAc...) asparagine glycan. 2 residues coordinate 3'-phosphoadenylyl sulfate: arginine 245 and serine 253. Positions 257 and 264 each coordinate substrate. Residues asparagine 324 and asparagine 329 are each glycosylated (N-linked (GlcNAc...) asparagine). 377 to 379 contacts 3'-phosphoadenylyl sulfate; that stretch reads TQF. Residue asparagine 380 is glycosylated (N-linked (GlcNAc...) asparagine). 383-384 is a binding site for 3'-phosphoadenylyl sulfate; that stretch reads RA. The interval 422-471 is disordered; sequence TKQLEHQRDRQKRREERRLQREHRDHQWPKEDGAAEGTVTEDYNSQVVRW. Positions 423-454 are enriched in basic and acidic residues; it reads KQLEHQRDRQKRREERRLQREHRDHQWPKEDG. The segment covering 462 to 471 has biased composition (polar residues); the sequence is EDYNSQVVRW.

Belongs to the sulfotransferase 6 family.

It localises to the membrane. It catalyses the reaction alpha-D-glucosaminyl-[heparan sulfate](n) + 3'-phosphoadenylyl sulfate = 6-sulfo-alpha-D-glucosaminyl-[heparan sulfate](n) + adenosine 3',5'-bisphosphate + H(+). Its function is as follows. 6-O-sulfation enzyme which catalyzes the transfer of sulfate from 3'-phosphoadenosine 5'-phosphosulfate (PAPS) to position 6 of the N-sulfoglucosamine residue (GlcNS) of heparan sulfate. The polypeptide is Heparan-sulfate 6-O-sulfotransferase 3 (HS6ST3) (Homo sapiens (Human)).